The chain runs to 158 residues: C-type lectin BML-1 (158 aa).

The signal sequence occupies residues Met-1–Cys-23. 4 disulfide bridges follow: Cys-26–Cys-37, Cys-54–Cys-154, Cys-61–Cys-156, and Cys-129–Cys-146. A C-type lectin domain is found at Lys-33–Gln-155. Ca(2+)-binding residues include Gln-119, Asp-121, and Glu-127. Residues Gln-119 to Asp-121 carry the Galactose-binding motif. N-linked (GlcNAc...) asparagine glycosylation occurs at Asn-134. 2 residues coordinate Ca(2+): Asn-142 and Asp-143.

This sequence belongs to the true venom lectin family. Homodimer; non-covalently linked. In terms of tissue distribution, expressed by the venom gland.

It localises to the secreted. Functionally, recombinant C-type lectin BML-1 is able to agglutinate erythrocytes. May be a calcium-dependent lectin. The sequence is that of C-type lectin BML-1 from Bungarus multicinctus (Many-banded krait).